Here is a 422-residue protein sequence, read N- to C-terminus: Adenylosuccinate synthetase (422 aa).

GTP-binding positions include Gly-11 to Lys-17 and Gly-39 to Thr-41. Residue Asp-12 is the Proton acceptor of the active site. Mg(2+) contacts are provided by Asp-12 and Gly-39. Residues Asp-12–Lys-15, Asn-37–His-40, Thr-129, Arg-143, Asn-219, Thr-234, and Arg-298 contribute to the IMP site. His-40 functions as the Proton donor in the catalytic mechanism. Val-294–Arg-300 contributes to the substrate binding site. GTP-binding positions include Arg-300, Lys-326–Asp-328, and Gly-409–Gly-411.

Belongs to the adenylosuccinate synthetase family. In terms of assembly, homodimer. The cofactor is Mg(2+).

It is found in the cytoplasm. The catalysed reaction is IMP + L-aspartate + GTP = N(6)-(1,2-dicarboxyethyl)-AMP + GDP + phosphate + 2 H(+). It functions in the pathway purine metabolism; AMP biosynthesis via de novo pathway; AMP from IMP: step 1/2. Its function is as follows. Plays an important role in the de novo pathway and in the salvage pathway of purine nucleotide biosynthesis. Catalyzes the first committed step in the biosynthesis of AMP from IMP. This chain is Adenylosuccinate synthetase, found in Ajellomyces capsulatus (strain H143) (Darling's disease fungus).